We begin with the raw amino-acid sequence, 165 residues long: Lipoprotein signal peptidase (165 aa).

The next 3 helical transmembrane spans lie at 12 to 32 (WLWL…LILQ), 70 to 90 (WFFA…MYRA), and 102 to 122 (ALII…GFVV). Catalysis depends on residues aspartate 123 and aspartate 141. Residues 137 to 157 (FNLADTAICIGAALVVLEGFL) form a helical membrane-spanning segment.

It belongs to the peptidase A8 family.

The protein localises to the cell inner membrane. It catalyses the reaction Release of signal peptides from bacterial membrane prolipoproteins. Hydrolyzes -Xaa-Yaa-Zaa-|-(S,diacylglyceryl)Cys-, in which Xaa is hydrophobic (preferably Leu), and Yaa (Ala or Ser) and Zaa (Gly or Ala) have small, neutral side chains.. The protein operates within protein modification; lipoprotein biosynthesis (signal peptide cleavage). In terms of biological role, this protein specifically catalyzes the removal of signal peptides from prolipoproteins. The sequence is that of Lipoprotein signal peptidase from Cronobacter sakazakii (strain ATCC BAA-894) (Enterobacter sakazakii).